A 394-amino-acid polypeptide reads, in one-letter code: Olfactomedin-like protein 3B (394 aa).

A signal peptide spans 1–18 (MKATIFFLLLTVLAHSRS). A coiled-coil region spans residues 29–94 (LENRMLAMEE…RVDRVEREMD (66 aa)). Residues 132-383 (VCVNIISSLK…QILYKLELKK (252 aa)) enclose the Olfactomedin-like domain. C133 and C310 are oxidised to a cystine. N-linked (GlcNAc...) asparagine glycosylation is found at N169, N204, and N233.

It belongs to the OLFML3 family.

It is found in the secreted. Secreted scaffold protein that plays an essential role in dorsoventral patterning during early development. Stabilizes axial formation by restricting chordin (CHRD) activity on the dorsal side. Acts by facilitating the association between the tolloid proteases and their substrate chordin (CHRD), leading to enhance chordin (CHRD) degradation. This chain is Olfactomedin-like protein 3B (olfml3b), found in Danio rerio (Zebrafish).